A 236-amino-acid chain; its full sequence is Phosphoribosylaminoimidazole-succinocarboxamide synthase (236 aa).

The protein belongs to the SAICAR synthetase family.

The catalysed reaction is 5-amino-1-(5-phospho-D-ribosyl)imidazole-4-carboxylate + L-aspartate + ATP = (2S)-2-[5-amino-1-(5-phospho-beta-D-ribosyl)imidazole-4-carboxamido]succinate + ADP + phosphate + 2 H(+). It functions in the pathway purine metabolism; IMP biosynthesis via de novo pathway; 5-amino-1-(5-phospho-D-ribosyl)imidazole-4-carboxamide from 5-amino-1-(5-phospho-D-ribosyl)imidazole-4-carboxylate: step 1/2. This Campylobacter jejuni subsp. doylei (strain ATCC BAA-1458 / RM4099 / 269.97) protein is Phosphoribosylaminoimidazole-succinocarboxamide synthase.